The primary structure comprises 179 residues: Large ribosomal subunit protein uL10 (179 aa).

It belongs to the universal ribosomal protein uL10 family. In terms of assembly, part of the ribosomal stalk of the 50S ribosomal subunit. The N-terminus interacts with L11 and the large rRNA to form the base of the stalk. The C-terminus forms an elongated spine to which L12 dimers bind in a sequential fashion forming a multimeric L10(L12)X complex.

Forms part of the ribosomal stalk, playing a central role in the interaction of the ribosome with GTP-bound translation factors. The polypeptide is Large ribosomal subunit protein uL10 (Thermotoga neapolitana (strain ATCC 49049 / DSM 4359 / NBRC 107923 / NS-E)).